The sequence spans 102 residues: Integration host factor subunit beta (102 aa).

The protein belongs to the bacterial histone-like protein family. Heterodimer of an alpha and a beta chain.

In terms of biological role, this protein is one of the two subunits of integration host factor, a specific DNA-binding protein that functions in genetic recombination as well as in transcriptional and translational control. The chain is Integration host factor subunit beta from Rhodopseudomonas palustris (strain BisA53).